A 231-amino-acid polypeptide reads, in one-letter code: Probable amino-acid ABC transporter permease protein y4tG (231 aa).

6 helical membrane passes run 9–29 (TGNGELAFAISILPMLLMGLI), 32–52 (LQAAFLGFFVACVLGMVFAVL), 64–84 (AAVLIEFIRDTPLIAQLFFLY), 86–106 (VLPEYGIIFPAFLTGALALGI), 161–181 (YLVSIMKDVPVLSVVTIVEML), and 196–216 (VPLSMVGGIYLILTIVASALV). Residues 28–217 (LITTLQAAFL…LTIVASALVR (190 aa)) form the ABC transmembrane type-1 domain.

This sequence belongs to the binding-protein-dependent transport system permease family. HisMQ subfamily.

The protein localises to the cell inner membrane. Functionally, probably part of the binding-protein-dependent transport system y4tEFGH for an amino acid. Probably responsible for the translocation of the substrate across the membrane. The sequence is that of Probable amino-acid ABC transporter permease protein y4tG from Sinorhizobium fredii (strain NBRC 101917 / NGR234).